The following is a 440-amino-acid chain: UDP-N-acetylmuramoylalanine--D-glutamate ligase (440 aa).

Gly-113–Thr-119 is a binding site for ATP.

The protein belongs to the MurCDEF family.

The protein localises to the cytoplasm. It catalyses the reaction UDP-N-acetyl-alpha-D-muramoyl-L-alanine + D-glutamate + ATP = UDP-N-acetyl-alpha-D-muramoyl-L-alanyl-D-glutamate + ADP + phosphate + H(+). The protein operates within cell wall biogenesis; peptidoglycan biosynthesis. Cell wall formation. Catalyzes the addition of glutamate to the nucleotide precursor UDP-N-acetylmuramoyl-L-alanine (UMA). This Buchnera aphidicola subsp. Acyrthosiphon pisum (strain APS) (Acyrthosiphon pisum symbiotic bacterium) protein is UDP-N-acetylmuramoylalanine--D-glutamate ligase (murD).